A 268-amino-acid chain; its full sequence is tRNA pseudouridine synthase A (268 aa).

Asp52 functions as the Nucleophile in the catalytic mechanism. Substrate is bound at residue Tyr110.

It belongs to the tRNA pseudouridine synthase TruA family. In terms of assembly, homodimer.

It catalyses the reaction uridine(38/39/40) in tRNA = pseudouridine(38/39/40) in tRNA. Formation of pseudouridine at positions 38, 39 and 40 in the anticodon stem and loop of transfer RNAs. The sequence is that of tRNA pseudouridine synthase A from Prochlorococcus marinus subsp. pastoris (strain CCMP1986 / NIES-2087 / MED4).